The primary structure comprises 196 residues: DnaA initiator-associating protein DiaA (196 aa).

Residues 34 to 196 (LVQSLLNGNK…DNTLFPHQDD (163 aa)) form the SIS domain.

The protein belongs to the SIS family. DiaA subfamily. In terms of assembly, homotetramer; dimer of dimers.

In terms of biological role, required for the timely initiation of chromosomal replication via direct interactions with the DnaA initiator protein. The protein is DnaA initiator-associating protein DiaA of Shigella boydii serotype 18 (strain CDC 3083-94 / BS512).